Here is a 332-residue protein sequence, read N- to C-terminus: Junctional sarcoplasmic reticulum protein 1 (332 aa).

The mediates interaction with CACNA1S stretch occupies residues 1–80; that stretch reads MTTRGLEDLD…EKELAGKEST (80 aa). Disordered regions lie at residues 1–125 and 159–332; these read MTTR…PWGD and APHP…KGRD. Phosphothreonine is present on T51. A compositionally biased stretch (basic and acidic residues) spans 66 to 76; that stretch reads GLKKMEKELAG. Composition is skewed to pro residues over residues 98–116 and 177–197; these read QAPP…PPRT and APKP…PGPP. Residues 221 to 232 show a composition bias toward low complexity; sequence GGSISEASGEES. 2 positions are modified to phosphoserine: S223 and S228. 2 stretches are compositionally biased toward basic and acidic residues: residues 239 to 256 and 283 to 307; these read GSQE…EKLK and RRWE…EHGK.

In terms of assembly, interacts with CACNA1S, CACNB1 and calsequestrin. Specifically expressed in skeletal muscle. Detected in skeletal muscle and tongue (at protein level).

Its subcellular location is the sarcoplasmic reticulum membrane. The protein localises to the endoplasmic reticulum membrane. In terms of biological role, involved in skeletal muscle excitation/contraction coupling (EC), probably acting as a regulator of the voltage-sensitive calcium channel CACNA1S. EC is a physiological process whereby an electrical signal (depolarization of the plasma membrane) is converted into a chemical signal, a calcium gradient, by the opening of ryanodine receptor calcium release channels. May regulate CACNA1S membrane targeting and activity. This chain is Junctional sarcoplasmic reticulum protein 1 (Jsrp1), found in Mus musculus (Mouse).